We begin with the raw amino-acid sequence, 146 residues long: Large ribosomal subunit protein uL13 (146 aa).

Belongs to the universal ribosomal protein uL13 family. Part of the 50S ribosomal subunit.

This protein is one of the early assembly proteins of the 50S ribosomal subunit, although it is not seen to bind rRNA by itself. It is important during the early stages of 50S assembly. This Mycoplasma pneumoniae (strain ATCC 29342 / M129 / Subtype 1) (Mycoplasmoides pneumoniae) protein is Large ribosomal subunit protein uL13.